The following is a 251-amino-acid chain: Low molecular mass lipoprotein PBMHPC-21 (251 aa).

The signal sequence occupies residues 1 to 16 (MKFVVVFASCVLAVSA).

The protein belongs to the 30 kDa lipoprotein family.

It localises to the secreted. This chain is Low molecular mass lipoprotein PBMHPC-21, found in Bombyx mori (Silk moth).